We begin with the raw amino-acid sequence, 360 residues long: Peptide chain release factor 1 (360 aa).

An N5-methylglutamine modification is found at Q235. A compositionally biased stretch (basic and acidic residues) spans 283–308 (MQKRQQAEASERRNLLGSGDRSDRNR). Residues 283-313 (MQKRQQAEASERRNLLGSGDRSDRNRTYNFP) are disordered.

The protein belongs to the prokaryotic/mitochondrial release factor family. Methylated by PrmC. Methylation increases the termination efficiency of RF1.

It is found in the cytoplasm. Its function is as follows. Peptide chain release factor 1 directs the termination of translation in response to the peptide chain termination codons UAG and UAA. This Yersinia enterocolitica serotype O:8 / biotype 1B (strain NCTC 13174 / 8081) protein is Peptide chain release factor 1.